A 272-amino-acid chain; its full sequence is Rhomboid-type serine protease B (272 aa).

5 helical membrane-spanning segments follow: residues 30 to 50, 72 to 92, 103 to 123, 133 to 153, and 164 to 184; these read IVLLVILAFWLLELQTIWSVV, PFIHVGFFHAFVNLLALTPLL, TAVALFIGPLSTFPAGIYILV, AVVGASVWIFLLLGSEAIKTF, and TKIPTWTSPLFACALVSIFVP. S138 functions as the Nucleophile in the catalytic mechanism. The N-linked (GlcNAc...) asparagine glycan is linked to N185. Residues 186–206 traverse the membrane as a helical segment; sequence TSFLGHLSAIIIGYLLGLGYL. H191 is an active-site residue.

Belongs to the peptidase S54 family.

It localises to the membrane. It catalyses the reaction Cleaves type-1 transmembrane domains using a catalytic dyad composed of serine and histidine that are contributed by different transmembrane domains.. Rhomboid protease that catalyzes intramembrane proteolysis. Required for transcription factor srbA activation by mediating its release from the membrane and thereby regulating its activity under hypoxic conditions. Essential for iron homeostasis and resistance to azoles such as voriconazole. Required for virulence in murine models of invasive pulmonary aspergillosis (IPA). This Aspergillus fumigatus (strain CBS 144.89 / FGSC A1163 / CEA10) (Neosartorya fumigata) protein is Rhomboid-type serine protease B.